Consider the following 183-residue polypeptide: uncharacterized protein (183 aa).

Disordered regions lie at residues 1 to 44, 68 to 137, and 163 to 183; these read MPFY…VMTA, GRAG…LGLR, and RDDP…VWPE.

This is an uncharacterized protein from Dryophytes versicolor (chameleon treefrog).